A 500-amino-acid polypeptide reads, in one-letter code: Aspartyl/glutamyl-tRNA(Asn/Gln) amidotransferase subunit B (500 aa).

The protein belongs to the GatB/GatE family. GatB subfamily. In terms of assembly, heterotrimer of A, B and C subunits.

The catalysed reaction is L-glutamyl-tRNA(Gln) + L-glutamine + ATP + H2O = L-glutaminyl-tRNA(Gln) + L-glutamate + ADP + phosphate + H(+). The enzyme catalyses L-aspartyl-tRNA(Asn) + L-glutamine + ATP + H2O = L-asparaginyl-tRNA(Asn) + L-glutamate + ADP + phosphate + 2 H(+). In terms of biological role, allows the formation of correctly charged Asn-tRNA(Asn) or Gln-tRNA(Gln) through the transamidation of misacylated Asp-tRNA(Asn) or Glu-tRNA(Gln) in organisms which lack either or both of asparaginyl-tRNA or glutaminyl-tRNA synthetases. The reaction takes place in the presence of glutamine and ATP through an activated phospho-Asp-tRNA(Asn) or phospho-Glu-tRNA(Gln). The sequence is that of Aspartyl/glutamyl-tRNA(Asn/Gln) amidotransferase subunit B from Rhizobium meliloti (strain 1021) (Ensifer meliloti).